Consider the following 566-residue polypeptide: DBIRD complex subunit ZNF326 (566 aa).

2 disordered regions span residues 19–81 and 145–180; these read HCGV…ESYD and RPGF…GRGT. Residues 59-73 are compositionally biased toward gly residues; sequence SHGGGGGGGGGGGNR. Residues 156 to 165 are compositionally biased toward low complexity; it reads SYSSYSSFSS. Positions 240–263 match the Bipartite nuclear localization signal motif; it reads KRKMMPQPYNKPGGTFIKKPKMTK. The tract at residues 314-347 is disordered; that stretch reads FGDSKGEGKSEEEEKRRIEARREKQRRRREKNSE. Basic and acidic residues predominate over residues 317-335; sequence SKGEGKSEEEEKRRIEARR. 2 C2H2 AKAP95-type zinc fingers span residues 359–381 and 452–475; these read CSFC…SAAH and CSAC…SPDH. Residues 516–566 form a disordered region; it reads PFEINDQAQEQQTEEEDKAEEPAEGEEEEEEEEEEETEEQTDFTLDHTEDN. Acidic residues predominate over residues 527 to 556; the sequence is QTEEEDKAEEPAEGEEEEEEEEEEETEEQT.

It belongs to the AKAP95 family. As to quaternary structure, component of the DBIRD complex.

It localises to the nucleus. In terms of biological role, core component of the DBIRD complex, a multiprotein complex that acts at the interface between core mRNP particles and RNA polymerase II (RNAPII) and integrates transcript elongation with the regulation of alternative splicing. The chain is DBIRD complex subunit ZNF326 (ZNF326) from Gallus gallus (Chicken).